Consider the following 177-residue polypeptide: MSRIGKKPVPLPKGVTASISGQSIEVKGPKGTRSFSATDDVTLALDEGSVKVTPRGTSKRARQQWGMVRSQVENLVTGVTSGFKKELEISGVGYRAQMAGNVLKLSLGYSHDVNFEVPAGVTVTTPKQTEITVEGIDQQLVGQVAANIREWRRPEPYKGKGIRYKDEFIFRKEGKKK.

It belongs to the universal ribosomal protein uL6 family. As to quaternary structure, part of the 50S ribosomal subunit.

In terms of biological role, this protein binds to the 23S rRNA, and is important in its secondary structure. It is located near the subunit interface in the base of the L7/L12 stalk, and near the tRNA binding site of the peptidyltransferase center. The chain is Large ribosomal subunit protein uL6 from Cereibacter sphaeroides (strain ATCC 17029 / ATH 2.4.9) (Rhodobacter sphaeroides).